The sequence spans 732 residues: Phosphoribosylformylglycinamidine synthase subunit PurL (732 aa).

The active site involves histidine 42. ATP is bound by residues tyrosine 45 and lysine 84. Residue glutamate 86 participates in Mg(2+) binding. Substrate-binding positions include 87–90 (SHNH) and arginine 109. Histidine 88 functions as the Proton acceptor in the catalytic mechanism. Aspartate 110 serves as a coordination point for Mg(2+). Glutamine 238 provides a ligand contact to substrate. Aspartate 266 provides a ligand contact to Mg(2+). Residue 310-312 (ESQ) coordinates substrate. ATP-binding residues include aspartate 496 and glycine 533. Residue asparagine 534 coordinates Mg(2+). Residue serine 536 coordinates substrate.

Belongs to the FGAMS family. As to quaternary structure, monomer. Part of the FGAM synthase complex composed of 1 PurL, 1 PurQ and 2 PurS subunits.

The protein localises to the cytoplasm. The enzyme catalyses N(2)-formyl-N(1)-(5-phospho-beta-D-ribosyl)glycinamide + L-glutamine + ATP + H2O = 2-formamido-N(1)-(5-O-phospho-beta-D-ribosyl)acetamidine + L-glutamate + ADP + phosphate + H(+). The protein operates within purine metabolism; IMP biosynthesis via de novo pathway; 5-amino-1-(5-phospho-D-ribosyl)imidazole from N(2)-formyl-N(1)-(5-phospho-D-ribosyl)glycinamide: step 1/2. In terms of biological role, part of the phosphoribosylformylglycinamidine synthase complex involved in the purines biosynthetic pathway. Catalyzes the ATP-dependent conversion of formylglycinamide ribonucleotide (FGAR) and glutamine to yield formylglycinamidine ribonucleotide (FGAM) and glutamate. The FGAM synthase complex is composed of three subunits. PurQ produces an ammonia molecule by converting glutamine to glutamate. PurL transfers the ammonia molecule to FGAR to form FGAM in an ATP-dependent manner. PurS interacts with PurQ and PurL and is thought to assist in the transfer of the ammonia molecule from PurQ to PurL. The chain is Phosphoribosylformylglycinamidine synthase subunit PurL from Campylobacter hominis (strain ATCC BAA-381 / DSM 21671 / CCUG 45161 / LMG 19568 / NCTC 13146 / CH001A).